Here is a 118-residue protein sequence, read N- to C-terminus: Ribonuclease P protein component (118 aa).

It belongs to the RnpA family. Consists of a catalytic RNA component (M1 or rnpB) and a protein subunit.

The enzyme catalyses Endonucleolytic cleavage of RNA, removing 5'-extranucleotides from tRNA precursor.. Functionally, RNaseP catalyzes the removal of the 5'-leader sequence from pre-tRNA to produce the mature 5'-terminus. It can also cleave other RNA substrates such as 4.5S RNA. The protein component plays an auxiliary but essential role in vivo by binding to the 5'-leader sequence and broadening the substrate specificity of the ribozyme. The sequence is that of Ribonuclease P protein component from Rickettsia typhi (strain ATCC VR-144 / Wilmington).